A 373-amino-acid polypeptide reads, in one-letter code: MSEKKINLLDLDRKGLRALFTEMGEKPFRADQLMKWIYHFGETDFDAMNNINKVLRAKLSARCEVVAPEISSYQKSADGTIKFAINVGQGQEVETVYIPEEDRATLCVSSQVGCALECTFCSTAQQGFNRNLTVSEIIGQVWRVANFIGFQKETGERPITNVVMMGMGEPLLNLANVIPAMDIMLDDFGFSLSKRRVTVSTSGVVPALDKLGDALDVALAVSIHAPNDELRDVLVPVNKKYPLEEFLAGIRRYIAKSNANRGRVTVEYVMLDHINDSTDQAHELAKLMKDTPCKINLIPFNPYPGSPYGRSSNSRIDRFSKVLMEYGLTVIVRKTRGDDIDAACGQLAGDIRDRTKRLAKKRMQDSQISVTIN.

The Proton acceptor role is filled by Glu-94. The Radical SAM core domain occupies 100–339; that stretch reads EEDRATLCVS…VIVRKTRGDD (240 aa). A disulfide bridge connects residues Cys-107 and Cys-344. 3 residues coordinate [4Fe-4S] cluster: Cys-114, Cys-118, and Cys-121. Residues 168–169, Ser-200, 222–224, and Asn-301 each bind S-adenosyl-L-methionine; these read GE and SIH. Catalysis depends on Cys-344, which acts as the S-methylcysteine intermediate.

This sequence belongs to the radical SAM superfamily. RlmN family. [4Fe-4S] cluster serves as cofactor.

Its subcellular location is the cytoplasm. The catalysed reaction is adenosine(2503) in 23S rRNA + 2 reduced [2Fe-2S]-[ferredoxin] + 2 S-adenosyl-L-methionine = 2-methyladenosine(2503) in 23S rRNA + 5'-deoxyadenosine + L-methionine + 2 oxidized [2Fe-2S]-[ferredoxin] + S-adenosyl-L-homocysteine. The enzyme catalyses adenosine(37) in tRNA + 2 reduced [2Fe-2S]-[ferredoxin] + 2 S-adenosyl-L-methionine = 2-methyladenosine(37) in tRNA + 5'-deoxyadenosine + L-methionine + 2 oxidized [2Fe-2S]-[ferredoxin] + S-adenosyl-L-homocysteine. Its function is as follows. Specifically methylates position 2 of adenine 2503 in 23S rRNA and position 2 of adenine 37 in tRNAs. m2A2503 modification seems to play a crucial role in the proofreading step occurring at the peptidyl transferase center and thus would serve to optimize ribosomal fidelity. This Shewanella sediminis (strain HAW-EB3) protein is Dual-specificity RNA methyltransferase RlmN.